Reading from the N-terminus, the 356-residue chain is Heparan sulfate 2-O-sulfotransferase 1 (356 aa).

Residues Met1–Lys11 lie on the Cytoplasmic side of the membrane. A helical; Signal-anchor for type II membrane protein transmembrane segment spans residues Leu12 to Glu28. A coiled-coil region spans residues Val24–Arg51. The Lumenal portion of the chain corresponds to Asn29–Asn356. Residues Lys83, Thr84, Ala85, Ser86, Thr87, and Ser88 each coordinate adenosine 3',5'-bisphosphate. Asn108 and Asn127 each carry an N-linked (GlcNAc...) asparagine glycan. Residues His140 and His142 contribute to the active site. Adenosine 3',5'-bisphosphate is bound by residues Arg164 and Ser172. Cystine bridges form between Cys201–Cys209 and Cys222–Cys228. 4 residues coordinate adenosine 3',5'-bisphosphate: Tyr279, Ser285, Thr290, and Lys293.

This sequence belongs to the sulfotransferase 3 family. As to quaternary structure, homotrimer. In terms of tissue distribution, expressed in heart, limb, head and trunk. At stages 20 and 24, it is expressed in the most regions of the first and second pharyngeal arche. In both wing and leg buds, it is detected at the overlying ectoderm and mesenchyme throughout stages 21, 23 and 24.

Its subcellular location is the golgi apparatus membrane. In terms of biological role, catalyzes the transfer of a sulfo group from 3'-phospho-5'-adenylyl sulfate (PAPS) to the 2-OH position of iduronic acid (IdoA) or glucuronic acid (GlcA) within the heparan sulfate (HS) chain and participates in HS biosynthesis. In Gallus gallus (Chicken), this protein is Heparan sulfate 2-O-sulfotransferase 1.